Here is a 1415-residue protein sequence, read N- to C-terminus: DNA-directed RNA polymerase subunit beta' (1415 aa).

Zn(2+) is bound by residues C69, C71, C84, and C87. Mg(2+) contacts are provided by D461, D463, and D465. Zn(2+) contacts are provided by C805, C879, C886, and C889.

The protein belongs to the RNA polymerase beta' chain family. The RNAP catalytic core consists of 2 alpha, 1 beta, 1 beta' and 1 omega subunit. When a sigma factor is associated with the core the holoenzyme is formed, which can initiate transcription. The cofactor is Mg(2+). Zn(2+) serves as cofactor.

It catalyses the reaction RNA(n) + a ribonucleoside 5'-triphosphate = RNA(n+1) + diphosphate. In terms of biological role, DNA-dependent RNA polymerase catalyzes the transcription of DNA into RNA using the four ribonucleoside triphosphates as substrates. The chain is DNA-directed RNA polymerase subunit beta' from Anaplasma marginale (strain Florida).